Reading from the N-terminus, the 289-residue chain is Tachykinins (289 aa).

The N-terminal stretch at 1-24 (MRSQGGSFAVALLLLLLLTAAATA) is a signal peptide. The propeptide occupies 25 to 49 (ADAEPDVESSVSTLPPGADAPRRMV). The segment at 28-80 (EPDVESSVSTLPPGADAPRRMVKRAPTSSFIGMRGKKEDEKDQRAADWMGPDP) is disordered. Position 61 is an arginine amide (R61). Residues 62 to 72 (GKKEDEKDQRA) show a composition bias toward basic and acidic residues. Residue N95 is modified to Asparagine amide. Position 110 is an arginine amide (R110). V155 is modified (valine amide). A disordered region spans residues 156 to 175 (GKRAPTGFTGMRGKRPMSGD). Arginine amide is present on residues R167, R198, R237, and R281. Positions 285-289 (PALAE) are excised as a propeptide.

The protein belongs to the tachykinin family.

The protein localises to the secreted. In terms of biological role, tachykinins are active peptides which excite neurons, evoke behavioral responses, are potent vasodilators and secretagogues, and contract (directly or indirectly) many smooth muscles. Stimulates gut muscle contractions. The protein is Tachykinins of Drosophila pseudoobscura pseudoobscura (Fruit fly).